Consider the following 78-residue polypeptide: Large ribosomal subunit protein bL28 (78 aa).

This sequence belongs to the bacterial ribosomal protein bL28 family.

This is Large ribosomal subunit protein bL28 from Acinetobacter baylyi (strain ATCC 33305 / BD413 / ADP1).